A 46-amino-acid polypeptide reads, in one-letter code: Alpha-1-antiproteinase (46 aa).

At Ser30 the chain carries Phosphoserine.

This sequence belongs to the serpin family. Post-translationally, N-glycosylated; contains bi- and triantennary glycans with a bisecting N-acetylglucosamine and fucose residue. As to expression, plasma.

It is found in the secreted. The chain is Alpha-1-antiproteinase from Notamacropus eugenii (Tammar wallaby).